Reading from the N-terminus, the 339-residue chain is Phosphoribosylformylglycinamidine cyclo-ligase (339 aa).

It belongs to the AIR synthase family.

It localises to the cytoplasm. It catalyses the reaction 2-formamido-N(1)-(5-O-phospho-beta-D-ribosyl)acetamidine + ATP = 5-amino-1-(5-phospho-beta-D-ribosyl)imidazole + ADP + phosphate + H(+). It participates in purine metabolism; IMP biosynthesis via de novo pathway; 5-amino-1-(5-phospho-D-ribosyl)imidazole from N(2)-formyl-N(1)-(5-phospho-D-ribosyl)glycinamide: step 2/2. The polypeptide is Phosphoribosylformylglycinamidine cyclo-ligase (Desulfitobacterium hafniense (strain DSM 10664 / DCB-2)).